The primary structure comprises 91 residues: Probable Fe(2+)-trafficking protein (91 aa).

Belongs to the Fe(2+)-trafficking protein family.

Could be a mediator in iron transactions between iron acquisition and iron-requiring processes, such as synthesis and/or repair of Fe-S clusters in biosynthetic enzymes. This chain is Probable Fe(2+)-trafficking protein, found in Xanthomonas axonopodis pv. citri (strain 306).